The sequence spans 608 residues: uncharacterized protein (608 aa).

Residues 4 to 24 form a helical membrane-spanning segment; it reads LIFMALLMSLLFIGTVFGYGD.

To M.jannaschii MJ1394 and A.fulgidus AF2028.

The protein resides in the membrane. This is an uncharacterized protein from Methanocaldococcus jannaschii (strain ATCC 43067 / DSM 2661 / JAL-1 / JCM 10045 / NBRC 100440) (Methanococcus jannaschii).